Consider the following 122-residue polypeptide: Large ribosomal subunit protein bL12 (122 aa).

This sequence belongs to the bacterial ribosomal protein bL12 family. In terms of assembly, homodimer. Part of the ribosomal stalk of the 50S ribosomal subunit. Forms a multimeric L10(L12)X complex, where L10 forms an elongated spine to which 2 to 4 L12 dimers bind in a sequential fashion. Binds GTP-bound translation factors.

Its function is as follows. Forms part of the ribosomal stalk which helps the ribosome interact with GTP-bound translation factors. Is thus essential for accurate translation. This is Large ribosomal subunit protein bL12 from Staphylococcus aureus (strain Newman).